The sequence spans 204 residues: Inactive ribonuclease-like protein 9 (204 aa).

The signal sequence occupies residues 1–26 (MMRTLITTHPLLLLLLLQQLLQPVQL). Disulfide bonds link C97/C152, C115/C167, and C122/C129. N130 and N142 each carry an N-linked (GlcNAc...) asparagine glycan.

Belongs to the pancreatic ribonuclease family.

The protein localises to the secreted. Its function is as follows. Does not exhibit any ribonuclease activity. This is Inactive ribonuclease-like protein 9 (RNASE9) from Chlorocebus pygerythrus (Vervet monkey).